We begin with the raw amino-acid sequence, 306 residues long: Putative HPr kinase/phosphorylase 2 (306 aa).

Residues H138 and K159 contribute to the active site. An ATP-binding site is contributed by 153-160 (GESGVGKS). S160 contacts Mg(2+). D177 (proton acceptor; for phosphorylation activity. Proton donor; for dephosphorylation activity) is an active-site residue. An important for the catalytic mechanism of both phosphorylation and dephosphorylation region spans residues 201-210 (LALRSVGLLN). The important for the catalytic mechanism of dephosphorylation stretch occupies residues 264-269 (QLQPGR).

The protein belongs to the HPrK/P family. In terms of assembly, homohexamer. It depends on Mg(2+) as a cofactor.

It carries out the reaction [HPr protein]-L-serine + ATP = [HPr protein]-O-phospho-L-serine + ADP + H(+). The enzyme catalyses [HPr protein]-O-phospho-L-serine + phosphate + H(+) = [HPr protein]-L-serine + diphosphate. Functionally, catalyzes the ATP- as well as the pyrophosphate-dependent phosphorylation of a specific serine residue in HPr, a phosphocarrier protein of the phosphoenolpyruvate-dependent sugar phosphotransferase system (PTS). HprK/P also catalyzes the pyrophosphate-producing, inorganic phosphate-dependent dephosphorylation (phosphorolysis) of seryl-phosphorylated HPr (P-Ser-HPr). The two antagonistic activities of HprK/P are regulated by several intracellular metabolites, which change their concentration in response to the absence or presence of rapidly metabolisable carbon sources (glucose, fructose, etc.) in the growth medium. Also phosphorylates/dephosphorylates the HPr-like catabolite repression protein crh on a specific serine residue. Therefore, by controlling the phosphorylation state of HPr and crh, HPrK/P is a sensor enzyme that plays a major role in the regulation of carbon metabolism and sugar transport: it mediates carbon catabolite repression (CCR), and regulates PTS-catalyzed carbohydrate uptake and inducer exclusion. The protein is Putative HPr kinase/phosphorylase 2 (hprK2) of Oceanobacillus iheyensis (strain DSM 14371 / CIP 107618 / JCM 11309 / KCTC 3954 / HTE831).